A 259-amino-acid polypeptide reads, in one-letter code: Ribosomal RNA small subunit methyltransferase J (259 aa).

S-adenosyl-L-methionine-binding positions include 107–108 (RD), 123–124 (ER), 159–160 (SS), and Asp-177.

This sequence belongs to the methyltransferase superfamily. RsmJ family.

It is found in the cytoplasm. The enzyme catalyses guanosine(1516) in 16S rRNA + S-adenosyl-L-methionine = N(2)-methylguanosine(1516) in 16S rRNA + S-adenosyl-L-homocysteine + H(+). Its function is as follows. Specifically methylates the guanosine in position 1516 of 16S rRNA. The sequence is that of Ribosomal RNA small subunit methyltransferase J from Shewanella loihica (strain ATCC BAA-1088 / PV-4).